A 148-amino-acid chain; its full sequence is Ribonuclease H (148 aa).

The region spanning 3–144 is the RNase H type-1 domain; sequence DKEQVVIYTD…ADQLANRGVA (142 aa). Residues Asp-12, Glu-50, Asp-72, and Asp-136 each coordinate Mg(2+). The tract at residues 125-148 is disordered; sequence GHTGDPGNERADQLANRGVAELPR.

Belongs to the RNase H family. Monomer. The cofactor is Mg(2+).

The protein localises to the cytoplasm. It catalyses the reaction Endonucleolytic cleavage to 5'-phosphomonoester.. Endonuclease that specifically degrades the RNA of RNA-DNA hybrids. In Pseudomonas aeruginosa (strain LESB58), this protein is Ribonuclease H.